The following is an 843-amino-acid chain: Respiratory burst oxidase homolog protein B (843 aa).

The span at 1–10 shows a compositional bias: acidic residues; the sequence is MREEEMESSS. The disordered stretch occupies residues 1–27; sequence MREEEMESSSEGETNKISRCKATGSDN. The Cytoplasmic segment spans residues 1 to 297; the sequence is MREEEMESSS…SYFFLENWKR (297 aa). EF-hand-like regions lie at residues 114-122 and 148-159; these read AVEGKLPKS and RGTTSSSITKTE. EF-hand domains lie at 171–206 and 215–250; these read SFDD…SASA and NVDE…VPSQ. Ca(2+) is bound by residues Asp-184, Asn-186, Asp-188, Arg-190, and Glu-195. Ser-268 bears the Phosphoserine mark. A helical membrane pass occupies residues 298–318; it reads IWVLTLWISICITLFTWKFLQ. At 319-383 the chain is on the extracellular side; the sequence is YKRKTVFEVM…FDDNINFHKV (65 aa). The Ferric oxidoreductase domain occupies 336–495; it reads KGSAETLKFN…LFVIVYVLLI (160 aa). The chain crosses the membrane as a helical span at residues 384-404; the sequence is VAFGIAVGIGLHAISHLACDF. Topologically, residues 405–439 are cytoplasmic; the sequence is PRLLHAKNVEFEPMKKFFGDERPENYGWFMKGTDG. Residues 440 to 460 form a helical membrane-spanning segment; the sequence is WTGVTMVVLMLVAYVLAQSWF. The Extracellular segment spans residues 461-482; sequence RRNRANLPKSLKRLTGFNAFWY. A helical transmembrane segment spans residues 483-503; sequence SHHLFVIVYVLLIVHGYFVYL. Over 504–511 the chain is Cytoplasmic; sequence SKEWYHKT. Residues 512-529 traverse the membrane as a helical segment; that stretch reads TWMYLAVPVLLYAFERLI. At 530-659 the chain is on the extracellular side; it reads RAFRPGAKAV…PYGAPAQDYR (130 aa). The FAD-binding FR-type domain occupies 534-657; the sequence is PGAKAVKVLK…DGPYGAPAQD (124 aa). A helical transmembrane segment spans residues 660-680; the sequence is NYDVLLLVGLGIGATPLISII. Residues 681–843 are Cytoplasmic-facing; it reads RDVLNNIKNQ…TKFEFHKENF (163 aa).

The protein belongs to the RBOH (TC 5.B.1.3) family. Monomer and homodimer.

It is found in the membrane. Calcium-dependent NADPH oxidase that generates superoxide. The protein is Respiratory burst oxidase homolog protein B (RBOHB) of Arabidopsis thaliana (Mouse-ear cress).